The chain runs to 358 residues: Peptide chain release factor 1 (358 aa).

The residue at position 235 (Q235) is an N5-methylglutamine.

This sequence belongs to the prokaryotic/mitochondrial release factor family. In terms of processing, methylated by PrmC. Methylation increases the termination efficiency of RF1.

The protein resides in the cytoplasm. Functionally, peptide chain release factor 1 directs the termination of translation in response to the peptide chain termination codons UAG and UAA. The polypeptide is Peptide chain release factor 1 (Brachyspira hyodysenteriae (strain ATCC 49526 / WA1)).